The chain runs to 510 residues: NAD(P)H-quinone oxidoreductase subunit 2 B, chloroplastic (510 aa).

12 helical membrane passes run 24-44, 59-79, 99-119, 124-144, 149-169, 183-203, 229-249, 295-315, 323-343, 354-374, 395-415, and 418-438; these read LLLFQGSSIFPECILIFGLIL, WFYFISSTSLVISITALLFRW, IFQFLILLCSTLCIPLSVEYI, MAITEFLLFVLTATLGGMFLC, LITIFVAPECFSLCSYLLSGY, YLLMGGASSSILVHGFSWLYG, ISIALISITVGLGFKLSPAPF, WHLLLEILAILSMILGNLLAI, MLAYSSIGQIGYVIIGIIVGD, YMLFYISMNLGTFACIVLFGL, ALSLALCLLSLGGLPPLAGFF, and LYLFWCGWQAGLYLLVSIGLL.

It belongs to the complex I subunit 2 family. As to quaternary structure, NDH is composed of at least 16 different subunits, 5 of which are encoded in the nucleus.

It is found in the plastid. The protein resides in the chloroplast thylakoid membrane. The catalysed reaction is a plastoquinone + NADH + (n+1) H(+)(in) = a plastoquinol + NAD(+) + n H(+)(out). The enzyme catalyses a plastoquinone + NADPH + (n+1) H(+)(in) = a plastoquinol + NADP(+) + n H(+)(out). Functionally, NDH shuttles electrons from NAD(P)H:plastoquinone, via FMN and iron-sulfur (Fe-S) centers, to quinones in the photosynthetic chain and possibly in a chloroplast respiratory chain. The immediate electron acceptor for the enzyme in this species is believed to be plastoquinone. Couples the redox reaction to proton translocation, and thus conserves the redox energy in a proton gradient. The sequence is that of NAD(P)H-quinone oxidoreductase subunit 2 B, chloroplastic from Agrostis stolonifera (Creeping bentgrass).